Consider the following 410-residue polypeptide: Toluene 1,2-dioxygenase system ferredoxin--NAD(+) reductase component (410 aa).

FAD is bound at residue 4–35 (HVAIIGNGVGGFTTAQALRAEGFEGRISLIGD). Position 145–173 (145–173 (RLLIVGGGLIGCEVATTARKLGLSVTILE)) interacts with NAD(+).

This sequence belongs to the bacterial ring-hydroxylating dioxygenase ferredoxin reductase family. As to quaternary structure, this dioxygenase system consists of four proteins: the two subunits of the hydroxylase component (todC1 and todC2), a ferredoxin (TodB) and a ferredoxin reductase (TodA). FAD serves as cofactor.

It carries out the reaction 2 reduced [2Fe-2S]-[ferredoxin] + NAD(+) + H(+) = 2 oxidized [2Fe-2S]-[ferredoxin] + NADH. It functions in the pathway xenobiotic degradation; toluene degradation. Its function is as follows. Part of the electron transfer component of toluene 1,2-dioxygenase, transfers electrons from ferredoxin (TodB) to NADH. This chain is Toluene 1,2-dioxygenase system ferredoxin--NAD(+) reductase component (todA), found in Pseudomonas putida (strain ATCC 700007 / DSM 6899 / JCM 31910 / BCRC 17059 / LMG 24140 / F1).